A 146-amino-acid chain; its full sequence is Small ribosomal subunit protein bS16 (146 aa).

A disordered region spans residues 119–146; sequence GSENKGGKSKKAEEKSAEKTAEKSEGEA. Residues 128-146 show a composition bias toward basic and acidic residues; the sequence is KKAEEKSAEKTAEKSEGEA.

The protein belongs to the bacterial ribosomal protein bS16 family.

The polypeptide is Small ribosomal subunit protein bS16 (Thermobifida fusca (strain YX)).